The primary structure comprises 373 residues: Cytoplasmic tRNA 2-thiolation protein 1 (373 aa).

This sequence belongs to the TtcA family. CTU1/NCS6/ATPBD3 subfamily.

Its subcellular location is the cytoplasm. It participates in tRNA modification; 5-methoxycarbonylmethyl-2-thiouridine-tRNA biosynthesis. Functionally, plays a central role in 2-thiolation of mcm(5)S(2)U at tRNA wobble positions of tRNA(Lys), tRNA(Glu) and tRNA(Gln). Directly binds tRNAs and probably acts by catalyzing adenylation of tRNAs, an intermediate required for 2-thiolation. It is unclear whether it acts as a sulfurtransferase that transfers sulfur from thiocarboxylated URM1 onto the uridine of tRNAs at wobble position. Prior mcm(5) tRNA modification by the elongator complex is required for 2-thiolation. May also be involved in protein urmylation. The polypeptide is Cytoplasmic tRNA 2-thiolation protein 1 (Eremothecium gossypii (strain ATCC 10895 / CBS 109.51 / FGSC 9923 / NRRL Y-1056) (Yeast)).